Consider the following 403-residue polypeptide: Aloesone synthase (403 aa).

Cys174 is a catalytic residue. Residues Ser281 and 318-321 (GGRA) each bind CoA.

The protein belongs to the thiolase-like superfamily. Chalcone/stilbene synthases family. As to quaternary structure, homodimer.

It participates in secondary metabolite biosynthesis; flavonoid biosynthesis. Its function is as follows. Catalyzes the iterative condensations of 6, 7 or 8 molecules of malonyl-CoA to produce various aromatic polyketides. Produces the heptaketide aloesone, the aglycone of aloesin, from 7 molecules of malonyl-CoA as a major product. Also able to produce a hexaketide pyrone, a heptaketide 6-(2-acetyl-3,5-dihydroxybenzyl)-4-hydroxy-2-pyrone, a novel heptaketide 6-(2-(2,4-dihydroxy-6-methylphenyl)-2-oxoethyl)-4-hydroxy-2-pyrone and octaketides SEK4/SEK4b. In Aloe arborescens (Kidachi aloe), this protein is Aloesone synthase (PKS3).